The primary structure comprises 287 residues: Eukaryotic translation initiation factor 3 subunit G (287 aa).

Residues 163–207 (EEDLESKEKDTKLGPTVPGSGKYVAPGMRGDRPAVTGGAERRSEE) are disordered. Residues 208 to 286 (NTCRVTNLPE…LVLKVEWTRF (79 aa)) form the RRM domain.

It belongs to the eIF-3 subunit G family. Component of the eukaryotic translation initiation factor 3 (eIF-3) complex.

The protein localises to the cytoplasm. RNA-binding component of the eukaryotic translation initiation factor 3 (eIF-3) complex, which is involved in protein synthesis of a specialized repertoire of mRNAs and, together with other initiation factors, stimulates binding of mRNA and methionyl-tRNAi to the 40S ribosome. The eIF-3 complex specifically targets and initiates translation of a subset of mRNAs involved in cell proliferation. This subunit can bind 18S rRNA. The protein is Eukaryotic translation initiation factor 3 subunit G of Brugia malayi (Filarial nematode worm).